A 327-amino-acid polypeptide reads, in one-letter code: Nocardicin C-9' epimerase (327 aa).

Lys43 is modified (N6-(pyridoxal phosphate)lysine).

The protein belongs to the ACC deaminase/D-cysteine desulfhydrase family. Pyridoxal 5'-phosphate is required as a cofactor.

It catalyses the reaction isonocardicin C = nocardicin C. The catalysed reaction is isonocardicin A = nocardicin A. The protein operates within antibiotic biosynthesis. Involved in the biosynthesis of the beta-lactam antibiotic nocardicin A. Catalyzes the interconversion of the nocardicin homoseryl side chain in both nocardicin A with isonocardicin A, and nocardicin C with isonocardicin C. This chain is Nocardicin C-9' epimerase, found in Nocardia uniformis subsp. tsuyamanensis.